Here is a 338-residue protein sequence, read N- to C-terminus: Ornithine carbamoyltransferase, catabolic (338 aa).

Carbamoyl phosphate contacts are provided by residues 65–68 (STRT), glutamine 92, arginine 116, and 143–146 (HPTQ). L-ornithine is bound by residues asparagine 175, aspartate 239, and 243 to 244 (SM). Carbamoyl phosphate contacts are provided by residues 280–281 (CL) and arginine 325.

This sequence belongs to the aspartate/ornithine carbamoyltransferase superfamily. OTCase family.

The protein localises to the cytoplasm. The enzyme catalyses carbamoyl phosphate + L-ornithine = L-citrulline + phosphate + H(+). The protein operates within amino-acid degradation; L-arginine degradation via ADI pathway; carbamoyl phosphate from L-arginine: step 2/2. Reversibly catalyzes the transfer of the carbamoyl group from carbamoyl phosphate (CP) to the N(epsilon) atom of ornithine (ORN) to produce L-citrulline. This Treponema denticola (strain ATCC 35405 / DSM 14222 / CIP 103919 / JCM 8153 / KCTC 15104) protein is Ornithine carbamoyltransferase, catabolic.